The chain runs to 621 residues: UvrABC system protein C (621 aa).

One can recognise a GIY-YIG domain in the interval 13–92; sequence EKPGVYLMKN…IKKYRPRYNI (80 aa). The region spanning 204–239 is the UVR domain; it reads NEVINDLKIKMEKASSELKFEEAASFRDKLLAVEKI.

This sequence belongs to the UvrC family. Interacts with UvrB in an incision complex.

It localises to the cytoplasm. In terms of biological role, the UvrABC repair system catalyzes the recognition and processing of DNA lesions. UvrC both incises the 5' and 3' sides of the lesion. The N-terminal half is responsible for the 3' incision and the C-terminal half is responsible for the 5' incision. The sequence is that of UvrABC system protein C from Clostridium novyi (strain NT).